We begin with the raw amino-acid sequence, 268 residues long: Undecaprenyl-diphosphatase (268 aa).

The next 7 helical transmembrane spans lie at 47 to 67, 83 to 103, 109 to 129, 144 to 164, 184 to 204, 217 to 237, and 246 to 266; these read FTIL…FAKL, FVIG…LAGG, LFNP…LLWV, FPLP…IPGV, AAEF…VYDL, LIVA…VKSF, and FTLF…ALAL.

The protein belongs to the UppP family.

Its subcellular location is the cell inner membrane. It carries out the reaction di-trans,octa-cis-undecaprenyl diphosphate + H2O = di-trans,octa-cis-undecaprenyl phosphate + phosphate + H(+). Its function is as follows. Catalyzes the dephosphorylation of undecaprenyl diphosphate (UPP). Confers resistance to bacitracin. In Rhodopseudomonas palustris (strain BisB18), this protein is Undecaprenyl-diphosphatase.